Consider the following 114-residue polypeptide: Gene 37 protein (114 aa).

The chain is Gene 37 protein (37) from Mycobacterium (Mycobacteriophage L5).